The following is a 644-amino-acid chain: DNA mismatch repair protein MutL (644 aa).

The protein belongs to the DNA mismatch repair MutL/HexB family.

This protein is involved in the repair of mismatches in DNA. It is required for dam-dependent methyl-directed DNA mismatch repair. May act as a 'molecular matchmaker', a protein that promotes the formation of a stable complex between two or more DNA-binding proteins in an ATP-dependent manner without itself being part of a final effector complex. This Chlorobium chlorochromatii (strain CaD3) protein is DNA mismatch repair protein MutL.